The chain runs to 137 residues: Ubiquitin-conjugating enzyme variant MMS2 (137 aa).

The UBC core domain maps to 5–137 (PRNFRLLEEL…LRQPKEGETF (133 aa)). Serine 71 is modified (phosphoserine).

This sequence belongs to the ubiquitin-conjugating enzyme family. Heterodimer with UBC13.

Functionally, has a role in the DNA error-free postreplication repair (PRR) pathway. Lacks catalytic activity by itself. The UBC13/MMS2 heterodimer catalyzes the synthesis of non-canonical poly-ubiquitin chains that are linked through 'Lys-63'. This is Ubiquitin-conjugating enzyme variant MMS2 (MMS2) from Saccharomyces cerevisiae (strain ATCC 204508 / S288c) (Baker's yeast).